The sequence spans 221 residues: Penicillin-binding protein activator LpoB (221 aa).

The N-terminal stretch at 1-20 (MLNRMYRYALLATVALALSG) is a signal peptide. The N-palmitoyl cysteine moiety is linked to residue Cys21. The S-diacylglycerol cysteine moiety is linked to residue Cys21. The tract at residues 29 to 82 (PAPVEEAQPGTQQPTQPVPPPTQPVPTVPSVPSIPAQPGPIEHQPENATPEPKA) is disordered. Residues 44 to 57 (QPVPPPTQPVPTVP) show a composition bias toward pro residues.

The protein belongs to the LpoB family. In terms of assembly, interacts with PBP1b.

The protein localises to the cell outer membrane. In terms of biological role, regulator of peptidoglycan synthesis that is essential for the function of penicillin-binding protein 1B (PBP1b). The chain is Penicillin-binding protein activator LpoB from Cronobacter turicensis (strain DSM 18703 / CCUG 55852 / LMG 23827 / z3032).